A 576-amino-acid polypeptide reads, in one-letter code: Flagellin B (576 aa).

It belongs to the bacterial flagellin family. As to quaternary structure, heteromer of FlaA and FlaB. Interacts with FliW. Interacts with FliS.

The protein resides in the secreted. It is found in the bacterial flagellum. Its function is as follows. Flagellin is the subunit protein which polymerizes to form the filaments of bacterial flagella. This chain is Flagellin B (flaB), found in Campylobacter jejuni subsp. jejuni serotype O:6 (strain 81116 / NCTC 11828).